Consider the following 569-residue polypeptide: Urease subunit beta (569 aa).

The Urease domain maps to 131–569 (GGIDTHIHFI…VSLAQLFSIF (439 aa)). The Ni(2+) site is built by histidine 136, histidine 138, and lysine 219. Lysine 219 is subject to N6-carboxylysine. A substrate-binding site is contributed by histidine 221. Ni(2+) is bound by residues histidine 248 and histidine 274. Histidine 322 (proton donor) is an active-site residue. Position 362 (aspartate 362) interacts with Ni(2+).

Belongs to the metallo-dependent hydrolases superfamily. Urease alpha subunit family. In terms of assembly, heterohexamer of 3 UreA (alpha) and 3 UreB (beta) subunits. Ni cation serves as cofactor. Post-translationally, carboxylation allows a single lysine to coordinate two nickel ions.

The protein resides in the cytoplasm. The catalysed reaction is urea + 2 H2O + H(+) = hydrogencarbonate + 2 NH4(+). Its pathway is nitrogen metabolism; urea degradation; CO(2) and NH(3) from urea (urease route): step 1/1. The sequence is that of Urease subunit beta from Helicobacter pylori (strain HPAG1).